A 701-amino-acid chain; its full sequence is Long chain acyl-CoA synthetase 6, peroxisomal (701 aa).

A propeptide spans 1–38 (MDSSSSSSSAAARRRINAIHSHLVTSSRSSPLLRSNPT) (removed in mature form). Residues 15–23 (RINAIHSHL) carry the Microbody targeting signal motif. 266-277 (ICYTSGTTGTPK) serves as a coordination point for ATP. The interval 526-550 (DGWLHTGDIGLWLPGGRLKIIDRKK) is fatty acid-binding.

The protein belongs to the ATP-dependent AMP-binding enzyme family. Mg(2+) serves as cofactor. In terms of tissue distribution, expressed in roots, stems, leaves flowers and germinating seedling. Preferentially expressed in seeds and senescent leaves.

The protein localises to the peroxisome. Its subcellular location is the glyoxysome membrane. It carries out the reaction a long-chain fatty acid + ATP + CoA = a long-chain fatty acyl-CoA + AMP + diphosphate. The enzyme catalyses tetradecanoate + ATP + CoA = tetradecanoyl-CoA + AMP + diphosphate. It catalyses the reaction hexadecanoate + ATP + CoA = hexadecanoyl-CoA + AMP + diphosphate. The catalysed reaction is (9Z)-octadecenoate + ATP + CoA = (9Z)-octadecenoyl-CoA + AMP + diphosphate. It carries out the reaction (9Z,12Z)-octadecadienoate + ATP + CoA = (9Z,12Z)-octadecadienoyl-CoA + AMP + diphosphate. The enzyme catalyses (9Z,12Z,15Z)-octadecatrienoate + ATP + CoA = (9Z,12Z,15Z)-octadecatrienoyl-CoA + AMP + diphosphate. It participates in lipid metabolism; fatty acid metabolism. Its function is as follows. Activation of long-chain fatty acids for both synthesis of cellular lipids, and degradation via beta-oxidation. Preferentially uses palmitate, palmitoleate, oleate, linoleate and eicosenoate as substrates. Can use myristate and linolenate as substrates. May play a regulatory role both in fatty acid import into glyoxysomes and in fatty acid beta-oxidation. Functions redundantly with LACS7 in lipid mobilization for beta-oxidation during seed germination, which is essential for postgerminative growth and seedling establishment. This chain is Long chain acyl-CoA synthetase 6, peroxisomal, found in Arabidopsis thaliana (Mouse-ear cress).